A 71-amino-acid chain; its full sequence is Frenatin 2.3S (71 aa).

The N-terminal stretch at 1–22 (MAFLKKSLFLVLFLGLVSLSMG) is a signal peptide. Residues 21-56 (MGEREKREEEEEEEEENKEEEANEEGKGESEEKRGL) form a disordered region. A propeptide spanning residues 23–54 (EREKREEEEEEEEENKEEEANEEGKGESEEKR) is cleaved from the precursor. A compositionally biased stretch (acidic residues) spans 28–43 (EEEEEEEEENKEEEAN). Basic and acidic residues predominate over residues 44 to 55 (EEGKGESEEKRG). Gly70 carries the glycine amide; in Frenatin 2.1S modification.

The protein belongs to the frog skin active peptide (FSAP) family. Frenatin subfamily. In terms of processing, frenatin 2.3S is not amidated. In terms of tissue distribution, expressed by the skin glands.

Its subcellular location is the secreted. In terms of biological role, antimicrobial peptide with potent activity against Gram-negative bacteria. Shows immunostimulatory actions both in vitro and in vivo. In vitro, is cytotoxic to non-small cell lung adenocarcinoma A549 cells. Also, stimulates production of pro-inflammatory cytokines by mouse peritoneal macrophages and down-regulates production of the anti-inflammatory cytokine IL-10 by lipopolysaccharide (LPS)-stimulated cells. In vivo, intraperitoneal injection in mice enhances the activation state and homing capacity of Th1 type lymphocytes and promotes the recruitment, activation and tumoricidal capacities of peritoneal NK cells. Has a very weak activity in stimulation of insulin release and a weak hemolytic activity. Functionally, antimicrobial peptide with potent activity against some Gram-positive and Gram-negative bacteria. Has a multifunctional mode of action. It displays depolarization and bacterial cell leakage, and can also internalize into bacterial cells and alter specific gene expression involved in bacterial resistance mechanisms. Does not agglutinate bacteria and lipid vesicles, even a high concentrations. Also displays moderate cellular protection against yellow fever virus (YFV)-infected Vero cells without causing significant cytotoxicity. Shows a weak hemolytic activity, and is not cytotoxic to monocytes. Frenatin 2.3S (version without Gly-71) shows no or very weak antibacterial activity, shows no or very weak cytotoxicity to lung adenocarcinoma A549 cells and shows very weak hemolysis. It only stimulates production of pro-inflammatory cytokines IL-23 (but not IL-1beta and TNF-alpha) by mouse peritoneal macrophages and has no effect on the production of the anti-inflammatory cytokine IL-10. Frenatin 2.3S (version without Gly-71) very weakly stimulates insulin release. The sequence is that of Frenatin 2.3S from Sphaenorhynchus lacteus (Orinoco lime treefrog).